Here is a 155-residue protein sequence, read N- to C-terminus: Ciliary microtubule inner protein 2C (155 aa).

The protein belongs to the CIMIP2 family.

It localises to the cytoplasm. It is found in the cytoskeleton. The protein resides in the cilium axoneme. Functionally, microtubule inner protein (MIP) part of the dynein-decorated doublet microtubules (DMTs) in cilia axoneme, which is required for motile cilia beating. The polypeptide is Ciliary microtubule inner protein 2C (cimip2ca) (Xenopus laevis (African clawed frog)).